The chain runs to 371 residues: Anhydro-N-acetylmuramic acid kinase (371 aa).

Residue 12-20 coordinates ATP; it reads GTVLDGNID.

The protein belongs to the anhydro-N-acetylmuramic acid kinase family.

The enzyme catalyses 1,6-anhydro-N-acetyl-beta-muramate + ATP + H2O = N-acetyl-D-muramate 6-phosphate + ADP + H(+). It functions in the pathway amino-sugar metabolism; 1,6-anhydro-N-acetylmuramate degradation. The protein operates within cell wall biogenesis; peptidoglycan recycling. Functionally, catalyzes the specific phosphorylation of 1,6-anhydro-N-acetylmuramic acid (anhMurNAc) with the simultaneous cleavage of the 1,6-anhydro ring, generating MurNAc-6-P. Is required for the utilization of anhMurNAc either imported from the medium or derived from its own cell wall murein, and thus plays a role in cell wall recycling. This is Anhydro-N-acetylmuramic acid kinase from Brucella anthropi (strain ATCC 49188 / DSM 6882 / CCUG 24695 / JCM 21032 / LMG 3331 / NBRC 15819 / NCTC 12168 / Alc 37) (Ochrobactrum anthropi).